Consider the following 355-residue polypeptide: Protein-glutamate methylesterase/protein-glutamine glutaminase (355 aa).

A Response regulatory domain is found at 7–123 (AAVVVDDSQF…SVGIKQQQDE (117 aa)). Asp57 carries the 4-aspartylphosphate modification. Positions 139 to 159 (TEAAAERTTSTATSTTTSRSA) are disordered. The CheB-type methylesterase domain occupies 161-355 (EYVDKPTLVI…DGVLDTIMRE (195 aa)). Catalysis depends on residues Ser173, His200, and Asp297.

It belongs to the CheB family. In terms of processing, phosphorylated by CheA. Phosphorylation of the N-terminal regulatory domain activates the methylesterase activity.

Its subcellular location is the cytoplasm. The catalysed reaction is [protein]-L-glutamate 5-O-methyl ester + H2O = L-glutamyl-[protein] + methanol + H(+). The enzyme catalyses L-glutaminyl-[protein] + H2O = L-glutamyl-[protein] + NH4(+). Its function is as follows. Involved in chemotaxis. Part of a chemotaxis signal transduction system that modulates chemotaxis in response to various stimuli. Catalyzes the demethylation of specific methylglutamate residues introduced into the chemoreceptors (methyl-accepting chemotaxis proteins or MCP) by CheR. Also mediates the irreversible deamidation of specific glutamine residues to glutamic acid. This is Protein-glutamate methylesterase/protein-glutamine glutaminase from Natronomonas pharaonis (strain ATCC 35678 / DSM 2160 / CIP 103997 / JCM 8858 / NBRC 14720 / NCIMB 2260 / Gabara) (Halobacterium pharaonis).